Consider the following 98-residue polypeptide: Cystatin-A (98 aa).

Residue Met-1 is modified to N-acetylmethionine. The Secondary area of contact motif lies at 46–50; it reads QVVAG.

This sequence belongs to the cystatin family.

The protein resides in the cytoplasm. Functionally, this is an intracellular thiol proteinase inhibitor. This Bos taurus (Bovine) protein is Cystatin-A (CSTA).